The following is a 186-amino-acid chain: MPSFIKSCFSSNDWITDDKKEICFIGRSNVGKSSLINALANAKIAKTSNTPGRTQLANFYDFDKFRLIDLPGYGYAKVSKSKHFELSKIISEYIYLRKNLVAVFQIIDISVITDLDLQMSELLSNRFNQHYIVLNKADKEAKSYFDNNFAKIAAKLKKDKENIVCVSAKNKTNIPNLKKLIGSVIL.

The EngB-type G domain maps to 18–186 (DKKEICFIGR…LKKLIGSVIL (169 aa)). GTP contacts are provided by residues 26–33 (GRSNVGKS), 52–56 (GRTQL), 69–72 (DLPG), 135–138 (NKAD), and 166–168 (VSA). 2 residues coordinate Mg(2+): serine 33 and threonine 54.

It belongs to the TRAFAC class TrmE-Era-EngA-EngB-Septin-like GTPase superfamily. EngB GTPase family. Mg(2+) serves as cofactor.

Functionally, necessary for normal cell division and for the maintenance of normal septation. The protein is Probable GTP-binding protein EngB of Malacoplasma penetrans (strain HF-2) (Mycoplasma penetrans).